The primary structure comprises 269 residues: Putative pyruvate, phosphate dikinase regulatory protein (269 aa).

Residue 147–154 (GVSRTSKT) coordinates ADP.

This sequence belongs to the pyruvate, phosphate/water dikinase regulatory protein family. PDRP subfamily.

The catalysed reaction is N(tele)-phospho-L-histidyl/L-threonyl-[pyruvate, phosphate dikinase] + ADP = N(tele)-phospho-L-histidyl/O-phospho-L-threonyl-[pyruvate, phosphate dikinase] + AMP + H(+). It carries out the reaction N(tele)-phospho-L-histidyl/O-phospho-L-threonyl-[pyruvate, phosphate dikinase] + phosphate + H(+) = N(tele)-phospho-L-histidyl/L-threonyl-[pyruvate, phosphate dikinase] + diphosphate. Bifunctional serine/threonine kinase and phosphorylase involved in the regulation of the pyruvate, phosphate dikinase (PPDK) by catalyzing its phosphorylation/dephosphorylation. The chain is Putative pyruvate, phosphate dikinase regulatory protein from Geotalea uraniireducens (strain Rf4) (Geobacter uraniireducens).